The primary structure comprises 569 residues: 63 kDa chaperonin, mitochondrial (569 aa).

Residues 1 to 29 (MFKMYRSPHITRNSFKYLKATNINSCRFY) constitute a mitochondrion transit peptide.

This sequence belongs to the chaperonin (HSP60) family. As to quaternary structure, forms a single seven-member ring complex, in tight association with the p60 protein. In terms of tissue distribution, testis.

The protein localises to the mitochondrion. Its function is as follows. Implicated in mitochondrial protein import and macromolecular assembly. May facilitate the correct folding of imported proteins. May also prevent misfolding and promote the refolding and proper assembly of unfolded polypeptides generated under stress conditions in the mitochondrial matrix. The polypeptide is 63 kDa chaperonin, mitochondrial (Heliothis virescens (Tobacco budworm moth)).